The primary structure comprises 235 residues: Small capsomere-interacting protein (235 aa).

The segment at 104 to 235 (PRIIRPQPPN…SGNASRSRRV (132 aa)) is disordered. Positions 127 to 139 (PQKTQSADQSALQ) are enriched in polar residues. The segment covering 158 to 188 (TTSASVGQQQHVVSGSSGQQPQQGAQSSTVQ) has biased composition (low complexity). The span at 220-235 (LSHTGQSGNASRSRRV) shows a compositional bias: polar residues.

The protein belongs to the herpesviridae small capsomere-interacting protein family. Interacts with the major capsid protein/MCP.

Its subcellular location is the virion. The protein localises to the host nucleus. Functionally, participates in the assembly of the infectious particles by decorating the outer surface of the capsid shell and thus forming a layer between the capsid and the tegument. Complexes composed of the capsid protein VP5 and VP26 assemble together in the host cytoplasm and are translocated to the nucleus, where they accumulate and participate in capsid assembly. In terms of biological role, participates in the assembly of the infectious particles by decorating the outer surface of the capsid shell and thus forming a layer between the capsid and the tegument. Complexes composed of the major capsid protein and small capsomere-interacting protein/SCP assemble together in the host cytoplasm and are translocated to the nucleus, where they accumulate and participate in capsid assembly. The chain is Small capsomere-interacting protein from Homo sapiens (Human).